Consider the following 276-residue polypeptide: Sec-independent protein translocase protein TatC (276 aa).

The interval 1–29 (MVSLTSVPPYADATPDTRASSGPAPGRRK) is disordered. 6 helical membrane-spanning segments follow: residues 49-69 (GGLV…LVLL), 103-123 (LFLA…AFVT), 136-156 (GFLG…WWVL), 187-207 (LVLA…LNLA), 221-241 (WAVL…DALT), and 242-262 (MVLV…VAVW).

This sequence belongs to the TatC family. As to quaternary structure, the Tat system comprises two distinct complexes: a TatABC complex, containing multiple copies of TatA, TatB and TatC subunits, and a separate TatA complex, containing only TatA subunits. Substrates initially bind to the TatABC complex, which probably triggers association of the separate TatA complex to form the active translocon.

The protein localises to the cell membrane. Part of the twin-arginine translocation (Tat) system that transports large folded proteins containing a characteristic twin-arginine motif in their signal peptide across membranes. Together with TatB, TatC is part of a receptor directly interacting with Tat signal peptides. The sequence is that of Sec-independent protein translocase protein TatC from Xylanimonas cellulosilytica (strain DSM 15894 / JCM 12276 / CECT 5975 / KCTC 9989 / LMG 20990 / NBRC 107835 / XIL07).